We begin with the raw amino-acid sequence, 364 residues long: D-alanine--D-alanine ligase A (364 aa).

The ATP-grasp domain maps to 145 to 348 (KRLLRDAGLN…YTDLITRLIE (204 aa)). ATP is bound at residue 175–230 (ESKLGLPLFVKPANQGSSVGVSKVTSEEQYAIAVDLAFEFDHKVIVEQGIKGREIE). The Mg(2+) site is built by aspartate 302, glutamate 315, and asparagine 317.

The protein belongs to the D-alanine--D-alanine ligase family. Requires Mg(2+) as cofactor. Mn(2+) serves as cofactor.

It localises to the cytoplasm. The catalysed reaction is 2 D-alanine + ATP = D-alanyl-D-alanine + ADP + phosphate + H(+). The protein operates within cell wall biogenesis; peptidoglycan biosynthesis. Functionally, cell wall formation. The polypeptide is D-alanine--D-alanine ligase A (ddlA) (Escherichia coli O157:H7).